Consider the following 352-residue polypeptide: N-acetyl-gamma-glutamyl-phosphate reductase (352 aa).

Cysteine 155 is a catalytic residue.

It belongs to the NAGSA dehydrogenase family. Type 1 subfamily.

The protein resides in the cytoplasm. The enzyme catalyses N-acetyl-L-glutamate 5-semialdehyde + phosphate + NADP(+) = N-acetyl-L-glutamyl 5-phosphate + NADPH + H(+). Its pathway is amino-acid biosynthesis; L-arginine biosynthesis; N(2)-acetyl-L-ornithine from L-glutamate: step 3/4. Its function is as follows. Catalyzes the NADPH-dependent reduction of N-acetyl-5-glutamyl phosphate to yield N-acetyl-L-glutamate 5-semialdehyde. In Picosynechococcus sp. (strain ATCC 27264 / PCC 7002 / PR-6) (Agmenellum quadruplicatum), this protein is N-acetyl-gamma-glutamyl-phosphate reductase.